The primary structure comprises 632 residues: Golgin subfamily A member 8O (632 aa).

The tract at residues 1-76 (MAEETQHNKL…TSSATLKDLE (76 aa)) is disordered. A compositionally biased stretch (polar residues) spans 38–50 (TNGSIPETATSGG). Coiled-coil stretches lie at residues 85–150 (VLDS…TDLY) and 209–421 (ELEQ…SLMA). 3 disordered regions span residues 423–452 (PGEG…DPES), 505–524 (DAAL…DEGE), and 552–612 (NSAD…EHPG). The segment covering 427 to 440 (HGGEHLDSEGEEAP) has biased composition (basic and acidic residues). The segment covering 508–520 (LGGGHHQAGAQGG) has biased composition (gly residues). The span at 569-578 (AADKHGDLRE) shows a compositional bias: basic and acidic residues.

This sequence belongs to the GOLGA6 family.

The sequence is that of Golgin subfamily A member 8O (GOLGA8O) from Homo sapiens (Human).